The following is a 192-amino-acid chain: I-Kappa-B like protein H1 (192 aa).

ANK repeat units lie at residues 94 to 126 (KGAQ…DING), 131 to 161 (AGLT…DVKV), and 165 to 192 (GKET…SKKM).

Belongs to the polydnaviridae I-Kappa-B-like protein family.

Its function is as follows. Suppresses the host immune response through NF-kappa-B inactivation. Possesses ankyrin repeat domains required for NF-kappa-B binding but lacks the regulatory regions required for dissociation from NF-kappa-B and degradation. Therefore, prevents host NF-kappa-B release and subsequent activation. The sequence is that of I-Kappa-B like protein H1 (H4) from Microplitis demolitor bracovirus (isolate Webb) (MdBV).